Consider the following 461-residue polypeptide: Ornithine decarboxylase (461 aa).

At lysine 69 the chain carries N6-(pyridoxal phosphate)lysine. Residues serine 200, glycine 237, and 274-277 (EPGR) each bind pyridoxal 5'-phosphate. Serine 303 carries the phosphoserine; by CK2 modification. Residue 331–332 (YD) participates in substrate binding. Catalysis depends on cysteine 360, which acts as the Proton donor; shared with dimeric partner. An S-nitrosocysteine modification is found at cysteine 360. Residue aspartate 361 coordinates substrate. Tyrosine 389 contacts pyridoxal 5'-phosphate.

The protein belongs to the Orn/Lys/Arg decarboxylase class-II family. Homodimer. Only the dimer is catalytically active, as the active sites are constructed of residues from both monomers. The cofactor is pyridoxal 5'-phosphate.

It carries out the reaction L-ornithine + H(+) = putrescine + CO2. It participates in amine and polyamine biosynthesis; putrescine biosynthesis via L-ornithine pathway; putrescine from L-ornithine: step 1/1. Inhibited by antizymes (AZs) OAZ1, OAZ2 and OAZ3 in response to polyamine levels. AZs inhibit the assembly of the functional homodimer by binding to ODC monomers. Additionally, OAZ1 targets ODC monomers for ubiquitin-independent proteolytic destruction by the 26S proteasome. Its function is as follows. Catalyzes the first and rate-limiting step of polyamine biosynthesis that converts ornithine into putrescine, which is the precursor for the polyamines, spermidine and spermine. Polyamines are essential for cell proliferation and are implicated in cellular processes, ranging from DNA replication to apoptosis. In Rattus norvegicus (Rat), this protein is Ornithine decarboxylase (Odc1).